The primary structure comprises 153 residues: Endoribonuclease YbeY (153 aa).

Zn(2+) contacts are provided by His116, His120, and His126.

The protein belongs to the endoribonuclease YbeY family. It depends on Zn(2+) as a cofactor.

It localises to the cytoplasm. Single strand-specific metallo-endoribonuclease involved in late-stage 70S ribosome quality control and in maturation of the 3' terminus of the 16S rRNA. The polypeptide is Endoribonuclease YbeY (Leifsonia xyli subsp. xyli (strain CTCB07)).